A 377-amino-acid polypeptide reads, in one-letter code: Guanine nucleotide-binding protein subunit beta-1 (377 aa).

WD repeat units follow at residues 63–93 (GHTG…IVWN), 105–135 (LPCA…SIFN), 154–185 (GHKG…VLWD), 202–233 (GHTA…RLWD), 246–276 (GHEG…RLFD), 293–323 (GDIP…YVWD), and 339–369 (SHEG…KIWA).

The protein belongs to the WD repeat G protein beta family. In terms of assembly, g proteins are composed of 3 units, alpha, beta and gamma.

Functionally, guanine nucleotide-binding proteins (G proteins) are involved as a modulator or transducer in various transmembrane signaling systems. The beta and gamma chains are required for the GTPase activity, for replacement of GDP by GTP, and for G protein-effector interaction. This is Guanine nucleotide-binding protein subunit beta-1 from Nicotiana tabacum (Common tobacco).